Reading from the N-terminus, the 178-residue chain is Large ribosomal subunit protein uL6 (178 aa).

It belongs to the universal ribosomal protein uL6 family. In terms of assembly, part of the 50S ribosomal subunit.

This protein binds to the 23S rRNA, and is important in its secondary structure. It is located near the subunit interface in the base of the L7/L12 stalk, and near the tRNA binding site of the peptidyltransferase center. This is Large ribosomal subunit protein uL6 from Halobacterium salinarum (strain ATCC 700922 / JCM 11081 / NRC-1) (Halobacterium halobium).